Consider the following 95-residue polypeptide: Aspartyl/glutamyl-tRNA(Asn/Gln) amidotransferase subunit C (95 aa).

The protein belongs to the GatC family. As to quaternary structure, heterotrimer of A, B and C subunits.

It catalyses the reaction L-glutamyl-tRNA(Gln) + L-glutamine + ATP + H2O = L-glutaminyl-tRNA(Gln) + L-glutamate + ADP + phosphate + H(+). The enzyme catalyses L-aspartyl-tRNA(Asn) + L-glutamine + ATP + H2O = L-asparaginyl-tRNA(Asn) + L-glutamate + ADP + phosphate + 2 H(+). Functionally, allows the formation of correctly charged Asn-tRNA(Asn) or Gln-tRNA(Gln) through the transamidation of misacylated Asp-tRNA(Asn) or Glu-tRNA(Gln) in organisms which lack either or both of asparaginyl-tRNA or glutaminyl-tRNA synthetases. The reaction takes place in the presence of glutamine and ATP through an activated phospho-Asp-tRNA(Asn) or phospho-Glu-tRNA(Gln). The chain is Aspartyl/glutamyl-tRNA(Asn/Gln) amidotransferase subunit C from Ectopseudomonas mendocina (strain ymp) (Pseudomonas mendocina).